The chain runs to 480 residues: Aromatic-L-amino-acid decarboxylase (480 aa).

M1 is subject to N-acetylmethionine. 2 tandem repeats follow at residues 58–115 and 118–178. The segment at 58 to 178 is 2 X approximate tandem repeats; the sequence is GDIERIIMPG…AASPELTQAA (121 aa). T82 contributes to the substrate binding site. Residues A148 and S149 each coordinate pyridoxal 5'-phosphate. H192 is a substrate binding site. Positions 246 and 300 each coordinate pyridoxal 5'-phosphate. K303 carries the post-translational modification N6-(pyridoxal phosphate)lysine.

Belongs to the group II decarboxylase family. As to quaternary structure, homodimer. It depends on pyridoxal 5'-phosphate as a cofactor.

The catalysed reaction is L-dopa + H(+) = dopamine + CO2. It carries out the reaction 5-hydroxy-L-tryptophan + H(+) = serotonin + CO2. It functions in the pathway catecholamine biosynthesis; dopamine biosynthesis; dopamine from L-tyrosine: step 2/2. Functionally, catalyzes the decarboxylation of L-3,4-dihydroxyphenylalanine (DOPA) to dopamine and L-5-hydroxytryptophan to serotonin. The chain is Aromatic-L-amino-acid decarboxylase (DDC) from Cavia porcellus (Guinea pig).